A 199-amino-acid polypeptide reads, in one-letter code: Recombination protein RecR (199 aa).

The C4-type zinc finger occupies 56-71 (CQRCNTFTEGDICERC). Residues 79–174 (ELLCVVETPV…GVTRIARGVP (96 aa)) form the Toprim domain.

The protein belongs to the RecR family.

May play a role in DNA repair. It seems to be involved in an RecBC-independent recombinational process of DNA repair. It may act with RecF and RecO. The protein is Recombination protein RecR of Dechloromonas aromatica (strain RCB).